A 184-amino-acid polypeptide reads, in one-letter code: Small ribosomal subunit protein uS4 (184 aa).

The 65-residue stretch at 108–172 (RRLQTQVHRL…SPMTKESHPE (65 aa)) folds into the S4 RNA-binding domain. The interval 163-184 (SPMTKESHPERPAQIAASVVEE) is disordered.

Belongs to the universal ribosomal protein uS4 family. As to quaternary structure, part of the 30S ribosomal subunit. Contacts protein S5. The interaction surface between S4 and S5 is involved in control of translational fidelity.

One of the primary rRNA binding proteins, it binds directly to 16S rRNA where it nucleates assembly of the body of the 30S subunit. In terms of biological role, with S5 and S12 plays an important role in translational accuracy. The sequence is that of Small ribosomal subunit protein uS4 from Methanococcoides burtonii (strain DSM 6242 / NBRC 107633 / OCM 468 / ACE-M).